Consider the following 101-residue polypeptide: Signal recognition particle 19 kDa protein (101 aa).

It belongs to the SRP19 family. Part of the signal recognition particle protein translocation system, which is composed of SRP and FtsY. Archaeal SRP consists of a 7S RNA molecule of 300 nucleotides and two protein subunits: SRP54 and SRP19.

The protein localises to the cytoplasm. Its function is as follows. Involved in targeting and insertion of nascent membrane proteins into the cytoplasmic membrane. Binds directly to 7S RNA and mediates binding of the 54 kDa subunit of the SRP. The protein is Signal recognition particle 19 kDa protein of Thermofilum pendens (strain DSM 2475 / Hrk 5).